Reading from the N-terminus, the 574-residue chain is Egalitarian protein homolog (574 aa).

The disordered stretch occupies residues 259–278 (LNEDGSENGSDEGEETNNNG). A compositionally biased stretch (acidic residues) spans 262 to 273 (DGSENGSDEGEE). Residues 312 to 414 (NMEKKVVGLD…SLLQHEKFNK (103 aa)) form the 3'-5' exonuclease domain.

Component of a dynein-regulating complex composed of at least bicd-1, dlc-1 and egal-1.

Its subcellular location is the nucleus envelope. In terms of biological role, part of a complex with bicd-1 and dlc-1, which is recruited to the nuclear envelope by unc-83, where in turn, it recruits dynein to the nuclear surface and regulates nuclear migration in hypodermal precursor cells. In Caenorhabditis elegans, this protein is Egalitarian protein homolog.